A 189-amino-acid polypeptide reads, in one-letter code: Large ribosomal subunit protein bL9 (189 aa).

Belongs to the bacterial ribosomal protein bL9 family.

Binds to the 23S rRNA. The chain is Large ribosomal subunit protein bL9 from Methylobacterium nodulans (strain LMG 21967 / CNCM I-2342 / ORS 2060).